A 1203-amino-acid chain; its full sequence is Partitioning defective 3 homolog B (1203 aa).

Disordered stretches follow at residues 79-104 (FDEQ…PDAF) and 138-162 (RRSS…SGQS). Phosphoserine is present on Ser100. Positions 152–162 (QPSTASLSGQS) are enriched in polar residues. The PDZ 1 domain occupies 201–289 (TRAVEISGEG…SPSVILHVLL (89 aa)). The interval 334–374 (TRASSPEGEEPASPQQSKSPRVPRLGRKPSSPSLSPLMGFG) is disordered. 3 positions are modified to phosphoserine: Ser346, Ser352, and Ser368. PDZ domains are found at residues 383–468 (KIDL…VIAR) and 496–585 (TLEI…GMIQ). 7 positions are modified to phosphoserine: Ser635, Ser710, Ser728, Ser730, Ser746, Ser749, and Ser801. Positions 718–732 (GKVQSLADRRSDSPG) are enriched in basic and acidic residues. The segment at 718 to 743 (GKVQSLADRRSDSPGKDFGPTLGLKK) is disordered. 3 disordered regions span residues 787–927 (KSYD…EKQA), 968–994 (VFRS…PDHL), and 1050–1203 (RPSD…TAAV). Thr810 is subject to Phosphothreonine. Residues 827–842 (VENKAKNIKKTKEKEK) are compositionally biased toward basic and acidic residues. Positions 843 to 854 (KKGKGKLKVKEK) are enriched in basic residues. 4 stretches are compositionally biased toward basic and acidic residues: residues 855–865 (KLKEEHEDAER), 881–893 (KKDD…EQKG), 906–927 (ERMK…EKQA), and 984–994 (RDGRPLSPDHL). Ser1088 and Ser1182 each carry phosphoserine.

The protein belongs to the PAR3 family. As to quaternary structure, interacts with PARD6B. Interacts with INSC/inscuteable.

Its subcellular location is the endomembrane system. It is found in the cell junction. The protein resides in the tight junction. Its function is as follows. Putative adapter protein involved in asymmetrical cell division and cell polarization processes. May play a role in the formation of epithelial tight junctions. The chain is Partitioning defective 3 homolog B (Pard3b) from Mus musculus (Mouse).